A 174-amino-acid chain; its full sequence is ATP-dependent protease subunit HslV (174 aa).

Residue T2 is part of the active site. Positions 157, 160, and 163 each coordinate Na(+).

Belongs to the peptidase T1B family. HslV subfamily. In terms of assembly, a double ring-shaped homohexamer of HslV is capped on each side by a ring-shaped HslU homohexamer. The assembly of the HslU/HslV complex is dependent on binding of ATP.

It localises to the cytoplasm. The catalysed reaction is ATP-dependent cleavage of peptide bonds with broad specificity.. Allosterically activated by HslU binding. In terms of biological role, protease subunit of a proteasome-like degradation complex believed to be a general protein degrading machinery. This chain is ATP-dependent protease subunit HslV, found in Yersinia pseudotuberculosis serotype I (strain IP32953).